The chain runs to 125 residues: Ribosome-binding factor A (125 aa).

Belongs to the RbfA family. As to quaternary structure, monomer. Binds 30S ribosomal subunits, but not 50S ribosomal subunits or 70S ribosomes.

The protein resides in the cytoplasm. In terms of biological role, one of several proteins that assist in the late maturation steps of the functional core of the 30S ribosomal subunit. Associates with free 30S ribosomal subunits (but not with 30S subunits that are part of 70S ribosomes or polysomes). Required for efficient processing of 16S rRNA. May interact with the 5'-terminal helix region of 16S rRNA. This Chloroherpeton thalassium (strain ATCC 35110 / GB-78) protein is Ribosome-binding factor A.